The chain runs to 61 residues: Sec-independent protein translocase protein TatA (61 aa).

The helical transmembrane segment at 2–22 (GLSGISPLSLLLILAIIVALF) threads the bilayer.

This sequence belongs to the TatA/E family. As to quaternary structure, the Tat system comprises two distinct complexes: a TatABC complex, containing multiple copies of TatA, TatB and TatC subunits, and a separate TatA complex, containing only TatA subunits. Substrates initially bind to the TatABC complex, which probably triggers association of the separate TatA complex to form the active translocon.

The protein localises to the cell inner membrane. Its function is as follows. Part of the twin-arginine translocation (Tat) system that transports large folded proteins containing a characteristic twin-arginine motif in their signal peptide across membranes. TatA could form the protein-conducting channel of the Tat system. The sequence is that of Sec-independent protein translocase protein TatA from Legionella pneumophila (strain Paris).